Consider the following 98-residue polypeptide: Integration host factor subunit alpha (98 aa).

The interval 52–73 (FDLRQKSERPGRNPKTGEDIPI) is disordered. A compositionally biased stretch (basic and acidic residues) spans 54–73 (LRQKSERPGRNPKTGEDIPI).

It belongs to the bacterial histone-like protein family. As to quaternary structure, heterodimer of an alpha and a beta chain.

Functionally, this protein is one of the two subunits of integration host factor, a specific DNA-binding protein that functions in genetic recombination as well as in transcriptional and translational control. The chain is Integration host factor subunit alpha from Pseudoalteromonas atlantica (strain T6c / ATCC BAA-1087).